Here is a 528-residue protein sequence, read N- to C-terminus: Abrin-d (528 aa).

At Gln-1 the chain carries Pyrrolidone carboxylic acid. Glu-164 is an active-site residue. An N-linked (GlcNAc...) asparagine glycan is attached at Asn-200. 3 cysteine pairs are disulfide-bonded: Cys-247/Cys-269, Cys-286/Cys-305, and Cys-329/Cys-346. The Ricin B-type lectin 1 domain maps to 273–400 (YEPTVRIGGR…YLMRQGWRTG (128 aa)). Residues 283–325 (DGMCVDVYDDGYHNGNRIIAWKCKDRLEENQLWTLKSDLTIRS) form a 1-alpha repeat. One copy of the 1-beta repeat lies at 326–366 (NGKCLTTEGYAPGNYVMIYDCTSAVAEATYWEIWDNGTIIN). 2 N-linked (GlcNAc...) asparagine glycosylation sites follow: Asn-361 and Asn-401. A 1-gamma repeat occupies 369–401 (SALVLSAESSSMGGTLTVQTNEYLMRQGWRTGN). A Ricin B-type lectin 2 domain is found at 403–527 (TSPFVTSISG…GKPNQIWLTL (125 aa)). A 2-alpha repeat occupies 414–449 (SDLCMQAQGSNVWLADCDNNKKEQQWALYTDGSIRS). Disulfide bonds link Cys-417-Cys-430 and Cys-456-Cys-473. The stretch at 453-492 (TNNCLTSKDHKQGSPIVLMACSNGWASQRWLFKNDGSIYS) is one 2-beta repeat. A 2-gamma repeat occupies 495–528 (DDMVMDVKGSDPSLKQIILWPYTGKPNQIWLTLF).

The protein in the N-terminal section; belongs to the ribosome-inactivating protein family. Type 2 RIP subfamily. Disulfide-linked dimer of A and B chains.

It catalyses the reaction Endohydrolysis of the N-glycosidic bond at one specific adenosine on the 28S rRNA.. Functionally, the A chain is responsible for inhibiting protein synthesis through the catalytic inactivation of 60S ribosomal subunits by removing adenine from position 4,324 of 28S rRNA. The B chain is a galactose-specific lectin that facilitates the binding of abrin to the cell membrane that precedes endocytosis. The polypeptide is Abrin-d (Abrus precatorius (Indian licorice)).